Consider the following 416-residue polypeptide: Gamma-glutamyl phosphate reductase (416 aa).

This sequence belongs to the gamma-glutamyl phosphate reductase family.

Its subcellular location is the cytoplasm. It catalyses the reaction L-glutamate 5-semialdehyde + phosphate + NADP(+) = L-glutamyl 5-phosphate + NADPH + H(+). The protein operates within amino-acid biosynthesis; L-proline biosynthesis; L-glutamate 5-semialdehyde from L-glutamate: step 2/2. Functionally, catalyzes the NADPH-dependent reduction of L-glutamate 5-phosphate into L-glutamate 5-semialdehyde and phosphate. The product spontaneously undergoes cyclization to form 1-pyrroline-5-carboxylate. This is Gamma-glutamyl phosphate reductase from Streptococcus pyogenes serotype M1.